Reading from the N-terminus, the 371-residue chain is uncharacterized protein (371 aa).

Residues 287-323 (EVVTALDRYRQHLRETRERLEEKQGKLLEELKGYESM) adopt a coiled-coil conformation.

This is an uncharacterized protein from Aspergillus fumigatus (strain ATCC MYA-4609 / CBS 101355 / FGSC A1100 / Af293) (Neosartorya fumigata).